The sequence spans 262 residues: Phycoerythrobilin:ferredoxin oxidoreductase (262 aa).

This sequence belongs to the HY2 family.

It catalyses the reaction (3Z)-phycoerythrobilin + oxidized 2[4Fe-4S]-[ferredoxin] = 15,16-dihydrobiliverdin + reduced 2[4Fe-4S]-[ferredoxin] + 2 H(+). Functionally, catalyzes the two-electron reduction of the C2 and C3(1) diene system of 15,16-dihydrobiliverdin. This is Phycoerythrobilin:ferredoxin oxidoreductase from Synechococcus sp. (strain RCC307).